The following is a 137-amino-acid chain: Proofreading thioesterase EntH (137 aa).

Glu63 serves as the catalytic Nucleophile or proton acceptor.

This sequence belongs to the thioesterase PaaI family. In terms of assembly, homotetramer. Dimer of dimers. Interacts specifically with the aryl carrier protein (ArCP) domain of EntB.

It is found in the cytoplasm. Its pathway is siderophore biosynthesis; enterobactin biosynthesis. In terms of biological role, required for optimal enterobactin synthesis. Acts as a proofreading enzyme that prevents EntB misacylation by hydrolyzing the thioester bound existing between EntB and wrongly charged molecules. This chain is Proofreading thioesterase EntH, found in Escherichia coli O157:H7 (strain EC4115 / EHEC).